Consider the following 1232-residue polypeptide: Nitrate reductase alpha subunit (1232 aa).

A 4Fe-4S Mo/W bis-MGD-type domain is found at 53 to 117; that stretch reads DKVVRSTHGV…SFSWYSYSPT (65 aa). Residues histidine 60, cysteine 64, cysteine 68, and cysteine 103 each coordinate [4Fe-4S] cluster. Aspartate 233 serves as a coordination point for Mo-bis(molybdopterin guanine dinucleotide).

It belongs to the prokaryotic molybdopterin-containing oxidoreductase family. The cofactor is [4Fe-4S] cluster. Mo-bis(molybdopterin guanine dinucleotide) is required as a cofactor.

It localises to the cell membrane. It catalyses the reaction nitrate + a quinol = a quinone + nitrite + H2O. Its function is as follows. The alpha chain is the actual site of nitrate reduction. The polypeptide is Nitrate reductase alpha subunit (narG) (Mycobacterium tuberculosis (strain CDC 1551 / Oshkosh)).